A 162-amino-acid polypeptide reads, in one-letter code: MTARKPFWETKSLNQMTVPEWESLCDGCGLCCLVRFEDEDTGEIIPTRVHCQLFDEHRCTCKDYANRKKTVPDCIKLTPHNIETLEWMPPSCAYRRLHEGKTLPLWHPLITGDRESVHQAGVSVRDQTVSELSFSDPEDALDFVATDLMYDKSDVDWDPEEP.

The protein belongs to the UPF0260 family.

This is UPF0260 protein Caul_3920 from Caulobacter sp. (strain K31).